A 182-amino-acid chain; its full sequence is Large ribosomal subunit protein uL10 (182 aa).

It belongs to the universal ribosomal protein uL10 family. Part of the ribosomal stalk of the 50S ribosomal subunit. The N-terminus interacts with L11 and the large rRNA to form the base of the stalk. The C-terminus forms an elongated spine to which L12 dimers bind in a sequential fashion forming a multimeric L10(L12)X complex.

In terms of biological role, forms part of the ribosomal stalk, playing a central role in the interaction of the ribosome with GTP-bound translation factors. This chain is Large ribosomal subunit protein uL10, found in Gluconacetobacter diazotrophicus (strain ATCC 49037 / DSM 5601 / CCUG 37298 / CIP 103539 / LMG 7603 / PAl5).